Here is a 349-residue protein sequence, read N- to C-terminus: Dihydroorotate dehydrogenase (quinone) (349 aa).

FMN contacts are provided by residues 65 to 69 (AGFDK) and Ala89. Position 69 (Lys69) interacts with substrate. Residue 114–118 (NRMGF) coordinates substrate. 2 residues coordinate FMN: Asn143 and Asn176. A substrate-binding site is contributed by Asn176. Ser179 acts as the Nucleophile in catalysis. Asn181 serves as a coordination point for substrate. Residues Lys212 and Thr240 each contribute to the FMN site. 241 to 242 (NT) lines the substrate pocket. The disordered stretch occupies residues 244-265 (TERPESLSHPHAGEQGGLSGAP). A compositionally biased stretch (basic and acidic residues) spans 245-255 (ERPESLSHPHA). FMN is bound by residues Gly263, Gly290, and 311-312 (YT).

The protein belongs to the dihydroorotate dehydrogenase family. Type 2 subfamily. As to quaternary structure, monomer. The cofactor is FMN.

The protein resides in the cell membrane. The enzyme catalyses (S)-dihydroorotate + a quinone = orotate + a quinol. Its pathway is pyrimidine metabolism; UMP biosynthesis via de novo pathway; orotate from (S)-dihydroorotate (quinone route): step 1/1. Catalyzes the conversion of dihydroorotate to orotate with quinone as electron acceptor. This chain is Dihydroorotate dehydrogenase (quinone), found in Halobacterium salinarum (strain ATCC 29341 / DSM 671 / R1).